Consider the following 786-residue polypeptide: Endonuclease MutS2 (786 aa).

An ATP-binding site is contributed by 332 to 339 (GPNTGGKT). The region spanning 711 to 786 (VDLRGMDSIE…GTGVTIVELK (76 aa)) is the Smr domain.

Belongs to the DNA mismatch repair MutS family. MutS2 subfamily. As to quaternary structure, homodimer. Binds to stalled ribosomes, contacting rRNA.

Endonuclease that is involved in the suppression of homologous recombination and thus may have a key role in the control of bacterial genetic diversity. Its function is as follows. Acts as a ribosome collision sensor, splitting the ribosome into its 2 subunits. Detects stalled/collided 70S ribosomes which it binds and splits by an ATP-hydrolysis driven conformational change. Acts upstream of the ribosome quality control system (RQC), a ribosome-associated complex that mediates the extraction of incompletely synthesized nascent chains from stalled ribosomes and their subsequent degradation. Probably generates substrates for RQC. This Clostridium kluyveri (strain NBRC 12016) protein is Endonuclease MutS2.